The following is a 124-amino-acid chain: Apolipoprotein C-IV (124 aa).

Positions Met-1–Cys-27 are cleaved as a signal peptide.

It belongs to the apolipoprotein C4 family. Post-translationally, glycosylated; contains sialic acid. Present in up to five sialylated isoforms. As to expression, blood plasma, associated primarily with VLDL and HDL. Expressed mainly in the liver.

The protein resides in the secreted. Functionally, may participate in lipoprotein metabolism. This is Apolipoprotein C-IV (APOC4) from Oryctolagus cuniculus (Rabbit).